The following is a 418-amino-acid chain: Putative L-glutamine:3-amino-2,3-dideoxy-scyllo-inosose aminotransferase (418 aa).

Position 199 is an N6-(pyridoxal phosphate)lysine (K199).

It belongs to the DegT/DnrJ/EryC1 family. L-glutamine:2-deoxy-scyllo-inosose/scyllo-inosose aminotransferase subfamily. Pyridoxal 5'-phosphate is required as a cofactor.

It catalyses the reaction 3-amino-2,3-dideoxy-scyllo-inosose + L-glutamine = 2-deoxystreptamine + 2-oxoglutaramate. It functions in the pathway metabolic intermediate biosynthesis; 2-deoxystreptamine biosynthesis; 2-deoxystreptamine from D-glucose 6-phosphate: step 4/4. The protein operates within antibiotic biosynthesis; gentamicin biosynthesis. Catalyzes the transamination of 3-amino-2,3-dideoxy-scyllo-inosose (amino-DOI) into 2-deoxystreptamine (DOS). In Micromonospora echinospora (Micromonospora purpurea), this protein is Putative L-glutamine:3-amino-2,3-dideoxy-scyllo-inosose aminotransferase (gtmD).